The following is a 279-amino-acid chain: NAD kinase (279 aa).

The Proton acceptor role is filled by Asp57. NAD(+) contacts are provided by residues 57 to 58, 133 to 134, Arg159, Asp161, 172 to 177, and Ala196; these read DG, NE, and TAYNKS.

The protein belongs to the NAD kinase family. A divalent metal cation is required as a cofactor.

Its subcellular location is the cytoplasm. The enzyme catalyses NAD(+) + ATP = ADP + NADP(+) + H(+). Functionally, involved in the regulation of the intracellular balance of NAD and NADP, and is a key enzyme in the biosynthesis of NADP. Catalyzes specifically the phosphorylation on 2'-hydroxyl of the adenosine moiety of NAD to yield NADP. The protein is NAD kinase of Streptococcus thermophilus (strain CNRZ 1066).